We begin with the raw amino-acid sequence, 174 residues long: Co-chaperone protein HscB (174 aa).

Residues 2–74 (DYFTLFGLPA…LKRAEYMLSL (73 aa)) form the J domain.

It belongs to the HscB family. Interacts with HscA and stimulates its ATPase activity. Interacts with IscU.

Functionally, co-chaperone involved in the maturation of iron-sulfur cluster-containing proteins. Seems to help targeting proteins to be folded toward HscA. In Yersinia pestis bv. Antiqua (strain Antiqua), this protein is Co-chaperone protein HscB.